Here is a 477-residue protein sequence, read N- to C-terminus: MLGNIYFALASGLAARERLPEYANAVFAADFDRAYQLVDHHSSQRGKSDDYAGVLAMADASLLLECDEEAEEGFRLAQRLIRHSDDQLRVVSCRNTGWQALLRDRYAAAASCFSRMAEDDGATWTQQVEGLIGLALVHHQLGQQDASDDALRAAREAADGRSDRGWLATIDLIIYEFAVQAGIRCSNRLLEHAFWQSAEMGATLLANHGGRNGWTPTVSQGVPMPALIQRRAEYLSLLRRMADGDRAAIDPLMATLNHSRKLGSRLLMQTKVEVVLAALSGEQYDVAGRVFDQICNRETTYGARRWNFDFLYCRAKMAAQRGDAAGALKFYTTYMQDALRCLRTETVNVRRASAAVPVASRASDDVSARLSAKYRRAYRYIIENIERSDLTTREVAAHINVTERALQLAFKSAVGMSPSSVIRRMRLEGIRSDLLDSERNPSNIIDTASRWGIRSRSALVKGYRKQFNEAPSETIWR.

Positions 375–477 (RRAYRYIIEN…NEAPSETIWR (103 aa)) constitute an HTH araC/xylS-type domain. 2 consecutive DNA-binding regions (H-T-H motif) follow at residues 393–414 (REVAAHINVTERALQLAFKSAV) and 444–467 (IIDTASRWGIRSRSALVKGYRKQF).

Functionally, positive regulation of hypersensitive response genes involved in plant pathogenicity and partly of its own synthesis in minimal medium. This is Regulatory protein HrpB (hrpB) from Ralstonia nicotianae (strain ATCC BAA-1114 / GMI1000) (Ralstonia solanacearum).